Reading from the N-terminus, the 354-residue chain is Arginase-2, mitochondrial (354 aa).

Residues 1-22 (MSLRSHLSRLLRTQVHSVRKKS) constitute a mitochondrion transit peptide. The Mn(2+) site is built by His120, Asp143, His145, and Asp147. Substrate is bound by residues 145–149 (HADIN), 156–158 (SGN), and Asp202. Mn(2+)-binding residues include Asp251 and Asp253. The substrate site is built by Thr265 and Glu296. The tract at residues 332–354 (IVYDQLPTPSSPDESESEERVRI) is disordered.

The protein belongs to the arginase family. Homotrimer. It depends on Mn(2+) as a cofactor.

Its subcellular location is the mitochondrion. It carries out the reaction L-arginine + H2O = urea + L-ornithine. The protein operates within nitrogen metabolism; urea cycle; L-ornithine and urea from L-arginine: step 1/1. Functionally, may play a role in the regulation of extra-urea cycle arginine metabolism and also in down-regulation of nitric oxide synthesis. Extrahepatic arginase functions to regulate L-arginine bioavailability to nitric oxid synthase (NOS). Arginine metabolism is a critical regulator of innate and adaptive immune responses. Seems to be involved in negative regulation of the survival capacity of activated T cells. May suppress inflammation-related signaling in asthmatic airway epithelium. May play a role in promoting prenatal immune suppression. Regulates RPS6KB1 signaling, which promotes endothelial cell senescence and inflammation and implicates NOS3/eNOS dysfunction. Can inhibit endothelial autophagy independently of its enzymatic activity implicating mTORC2 signaling. Involved in vascular smooth muscle cell senescence and apoptosis independently of its enzymatic activity. The polypeptide is Arginase-2, mitochondrial (ARG2) (Bos taurus (Bovine)).